The sequence spans 479 residues: Xylose isomerase (479 aa).

H144 is a catalytic residue. Mn(2+)-binding residues include E275, E311, H314, D339, D350, D352, and Y382.

The protein belongs to the xylose isomerase family. In terms of assembly, homodimer. Requires Mn(2+) as cofactor.

It carries out the reaction alpha-D-xylose = alpha-D-xylulofuranose. This chain is Xylose isomerase (XYLA), found in Hordeum vulgare (Barley).